A 182-amino-acid chain; its full sequence is UPF0316 protein BCB4264_A3368 (182 aa).

The next 3 membrane-spanning stretches (helical) occupy residues 6–26, 32–52, and 58–78; these read LIFV…ILLV, SAAG…GIVF, and WMNI…GGYI.

The protein belongs to the UPF0316 family.

Its subcellular location is the cell membrane. This chain is UPF0316 protein BCB4264_A3368, found in Bacillus cereus (strain B4264).